A 292-amino-acid chain; its full sequence is MPSSHPLPPPELRDCPAPAKLNLFLHVTGRRADGYHTLQTVFQLVDWCDMLHFRRRDDGVVARVTEVPGVPAESDLVVRAARALQAATGTTFGAEIAIDKVLPMGGGIGGGSSDAATTLLALNHLWGLGLTRPELMRIGLTLGADVPVFVLGQNAFAQGIGEELTPVELPDSWFVIIHPKQHVPTAEIFSDECLTRDTPVSIIAVFAARTNKFDFGRNDLEPIATAKFGEVARALAWLKQHNQHARMTGSGACVFARFPDAKTAQQVLERLPPEWDGRCVRSLAHHPLAAFA.

Lysine 20 is an active-site residue. An ATP-binding site is contributed by proline 103–serine 113. Residue aspartate 145 is part of the active site.

Belongs to the GHMP kinase family. IspE subfamily.

The catalysed reaction is 4-CDP-2-C-methyl-D-erythritol + ATP = 4-CDP-2-C-methyl-D-erythritol 2-phosphate + ADP + H(+). It functions in the pathway isoprenoid biosynthesis; isopentenyl diphosphate biosynthesis via DXP pathway; isopentenyl diphosphate from 1-deoxy-D-xylulose 5-phosphate: step 3/6. Its function is as follows. Catalyzes the phosphorylation of the position 2 hydroxy group of 4-diphosphocytidyl-2C-methyl-D-erythritol. The chain is 4-diphosphocytidyl-2-C-methyl-D-erythritol kinase from Cupriavidus taiwanensis (strain DSM 17343 / BCRC 17206 / CCUG 44338 / CIP 107171 / LMG 19424 / R1) (Ralstonia taiwanensis (strain LMG 19424)).